A 573-amino-acid chain; its full sequence is Methionine--tRNA ligase (573 aa).

A 'HIGH' region motif is present at residues 10 to 20 (PYVNSVPHLGN). Zn(2+)-binding residues include Cys143, Cys146, Cys156, and Cys159. The 'KMSKS' region motif lies at 333-337 (KFSKS). Lys336 is an ATP binding site.

This sequence belongs to the class-I aminoacyl-tRNA synthetase family. MetG type 1 subfamily. Zn(2+) serves as cofactor.

The protein resides in the cytoplasm. It carries out the reaction tRNA(Met) + L-methionine + ATP = L-methionyl-tRNA(Met) + AMP + diphosphate. Its function is as follows. Is required not only for elongation of protein synthesis but also for the initiation of all mRNA translation through initiator tRNA(fMet) aminoacylation. The protein is Methionine--tRNA ligase of Saccharolobus islandicus (strain M.14.25 / Kamchatka #1) (Sulfolobus islandicus).